Here is a 154-residue protein sequence, read N- to C-terminus: Cyanate hydratase (154 aa).

Residues Arg-100, Glu-103, and Ser-126 contribute to the active site.

The protein belongs to the cyanase family.

The enzyme catalyses cyanate + hydrogencarbonate + 3 H(+) = NH4(+) + 2 CO2. In terms of biological role, catalyzes the reaction of cyanate with bicarbonate to produce ammonia and carbon dioxide. The sequence is that of Cyanate hydratase from Aspergillus terreus (strain NIH 2624 / FGSC A1156).